Reading from the N-terminus, the 149-residue chain is Flagellar assembly factor FliW (149 aa).

Belongs to the FliW family. Interacts with translational regulator CsrA and flagellin(s).

Its subcellular location is the cytoplasm. In terms of biological role, acts as an anti-CsrA protein, binds CsrA and prevents it from repressing translation of its target genes, one of which is flagellin. Binds to flagellin and participates in the assembly of the flagellum. In Thermotoga neapolitana (strain ATCC 49049 / DSM 4359 / NBRC 107923 / NS-E), this protein is Flagellar assembly factor FliW.